Reading from the N-terminus, the 232-residue chain is Ribose-5-phosphate isomerase A (232 aa).

Substrate is bound by residues 28–31, 83–86, and 96–99; these read TGST, DGAD, and KGGG. The Proton acceptor role is filled by Glu-105. Residue Lys-123 participates in substrate binding.

The protein belongs to the ribose 5-phosphate isomerase family. As to quaternary structure, homodimer.

It catalyses the reaction aldehydo-D-ribose 5-phosphate = D-ribulose 5-phosphate. It functions in the pathway carbohydrate degradation; pentose phosphate pathway; D-ribose 5-phosphate from D-ribulose 5-phosphate (non-oxidative stage): step 1/1. Its function is as follows. Catalyzes the reversible conversion of ribose-5-phosphate to ribulose 5-phosphate. This is Ribose-5-phosphate isomerase A from Rhizobium etli (strain ATCC 51251 / DSM 11541 / JCM 21823 / NBRC 15573 / CFN 42).